A 100-amino-acid polypeptide reads, in one-letter code: Large ribosomal subunit protein bL21 (100 aa).

It belongs to the bacterial ribosomal protein bL21 family. As to quaternary structure, part of the 50S ribosomal subunit. Contacts protein L20.

This protein binds to 23S rRNA in the presence of protein L20. The sequence is that of Large ribosomal subunit protein bL21 from Corynebacterium kroppenstedtii (strain DSM 44385 / JCM 11950 / CIP 105744 / CCUG 35717).